A 379-amino-acid polypeptide reads, in one-letter code: Dihydroorotate dehydrogenase (quinone) (379 aa).

FMN-binding positions include 79–83 (AGCDK) and A103. Position 83 (K83) interacts with substrate. Substrate is bound at residue 128–131 (NRLG). FMN is bound by residues N160 and N193. A substrate-binding site is contributed by N193. S196 functions as the Nucleophile in the catalytic mechanism. N198 provides a ligand contact to substrate. FMN contacts are provided by K231 and T259. A substrate-binding site is contributed by 260–261 (NT). Residues G289, G318, and 339-340 (YT) contribute to the FMN site.

Belongs to the dihydroorotate dehydrogenase family. Type 2 subfamily. In terms of assembly, monomer. Requires FMN as cofactor.

The protein localises to the cell membrane. The enzyme catalyses (S)-dihydroorotate + a quinone = orotate + a quinol. Its pathway is pyrimidine metabolism; UMP biosynthesis via de novo pathway; orotate from (S)-dihydroorotate (quinone route): step 1/1. In terms of biological role, catalyzes the conversion of dihydroorotate to orotate with quinone as electron acceptor. The protein is Dihydroorotate dehydrogenase (quinone) of Crocosphaera subtropica (strain ATCC 51142 / BH68) (Cyanothece sp. (strain ATCC 51142)).